Here is a 475-residue protein sequence, read N- to C-terminus: MIFAKKTEAAGFKAGVKDYRLTYYTPDYKVKDTDILAAFRVTPQPGVPPEEAAAAVAAESSTGTWTTVWTDGLTSLDRYKGRCYFIETFEGQKDNQFICYIAYPLDLFEEGSVTNLFTSIVGNVFGFKALRAIRLEDLRIPVAYVKTFEGPPHGIQVERDKLNKYGRALLGCTIKPKLGLSAKNYGRAVYEGLRGGLDFTKDDENVNSQPFMRWRDRFLFVAEAIYKSQSETGEVKGHYLNATAGTSEEVLKRAECAKELGVPIVMHDFLTGGFTTNTSLSKYCRESGLLLHIHRAMHAVVDRQKNHGIHFRVLAKTLRLSGGDHLHSGTVVGKLEGDKDVTLGFVDLMRDDYVELDRSRGIYFTQDWASMGGVIPVASGGIHVWHMPALVDIFGDDACLQFGGGTLGHPWGNAPGAVANRVALEACIKIRNQGQNVLREGGNALREATKWSPELAAACEVWKEIKFEFDTIDTI.

Substrate is bound by residues Asn-123 and Thr-173. The active-site Proton acceptor is Lys-175. Lys-177 serves as a coordination point for substrate. Mg(2+)-binding residues include Lys-201, Asp-203, and Glu-204. Lys-201 carries the post-translational modification N6-carboxylysine. The active-site Proton acceptor is His-294. The substrate site is built by Arg-295, His-327, and Ser-379.

The protein belongs to the RuBisCO large chain family. Type I subfamily. As to quaternary structure, heterohexadecamer of 8 large chains and 8 small chains. It depends on Mg(2+) as a cofactor.

Its subcellular location is the plastid. It localises to the chloroplast. It catalyses the reaction 2 (2R)-3-phosphoglycerate + 2 H(+) = D-ribulose 1,5-bisphosphate + CO2 + H2O. The catalysed reaction is D-ribulose 1,5-bisphosphate + O2 = 2-phosphoglycolate + (2R)-3-phosphoglycerate + 2 H(+). Functionally, ruBisCO catalyzes two reactions: the carboxylation of D-ribulose 1,5-bisphosphate, the primary event in carbon dioxide fixation, as well as the oxidative fragmentation of the pentose substrate in the photorespiration process. Both reactions occur simultaneously and in competition at the same active site. This is Ribulose bisphosphate carboxylase large chain from Bigelowiella natans (Pedinomonas minutissima).